Reading from the N-terminus, the 550-residue chain is Arginine--tRNA ligase (550 aa).

The 'HIGH' region signature appears at 130-140; the sequence is ANPTGPIHLGG.

It belongs to the class-I aminoacyl-tRNA synthetase family. As to quaternary structure, monomer.

The protein localises to the cytoplasm. The enzyme catalyses tRNA(Arg) + L-arginine + ATP = L-arginyl-tRNA(Arg) + AMP + diphosphate. In Rhodococcus opacus (strain B4), this protein is Arginine--tRNA ligase.